The sequence spans 113 residues: Mini zinc finger protein 3 (113 aa).

The ZF-HD dimerization-type; degenerate zinc-finger motif lies at 24 to 83 (YGECRRNHAASTGGHAVDGCREFIAAEDGGGGNSTGAVGVAAAALKCAACGCHRSFHRRV). The interval 93–113 (DCDSGDTSSSSPSSSSSLSSE) is disordered. The segment covering 97–113 (GDTSSSSPSSSSSLSSE) has biased composition (low complexity).

As to quaternary structure, homo- and heterodimers.

Its subcellular location is the cytoplasm. Its function is as follows. Inhibits zinc finger homeodomain (ZHD) transcription factors, by interacting with them to prevent both their nuclear localization and their DNA-binding properties. The sequence is that of Mini zinc finger protein 3 (MIF3) from Oryza sativa subsp. indica (Rice).